Reading from the N-terminus, the 113-residue chain is Large ribosomal subunit protein bL17 (113 aa).

It belongs to the bacterial ribosomal protein bL17 family. In terms of assembly, part of the 50S ribosomal subunit. Contacts protein L32.

The chain is Large ribosomal subunit protein bL17 from Caldicellulosiruptor bescii (strain ATCC BAA-1888 / DSM 6725 / KCTC 15123 / Z-1320) (Anaerocellum thermophilum).